The sequence spans 187 residues: Large ribosomal subunit protein uL13 (187 aa).

It belongs to the universal ribosomal protein uL13 family.

The sequence is that of Large ribosomal subunit protein uL13 (rpl13a) from Dictyostelium discoideum (Social amoeba).